The primary structure comprises 243 residues: Adenosylcobinamide-GDP ribazoletransferase (243 aa).

The next 5 membrane-spanning stretches (helical) occupy residues 31–51 (LLFY…FNTL), 55–75 (APLM…SGGL), 109–129 (IAVV…LALI), 133–153 (ASVW…GLFL), and 188–208 (VLLA…CFFW).

The protein belongs to the CobS family. It depends on Mg(2+) as a cofactor.

The protein resides in the cell inner membrane. The catalysed reaction is alpha-ribazole + adenosylcob(III)inamide-GDP = adenosylcob(III)alamin + GMP + H(+). The enzyme catalyses alpha-ribazole 5'-phosphate + adenosylcob(III)inamide-GDP = adenosylcob(III)alamin 5'-phosphate + GMP + H(+). It functions in the pathway cofactor biosynthesis; adenosylcobalamin biosynthesis; adenosylcobalamin from cob(II)yrinate a,c-diamide: step 7/7. Functionally, joins adenosylcobinamide-GDP and alpha-ribazole to generate adenosylcobalamin (Ado-cobalamin). Also synthesizes adenosylcobalamin 5'-phosphate from adenosylcobinamide-GDP and alpha-ribazole 5'-phosphate. This is Adenosylcobinamide-GDP ribazoletransferase from Pseudomonas syringae pv. syringae (strain B728a).